The chain runs to 148 residues: Large ribosomal subunit protein bL9 (148 aa).

This sequence belongs to the bacterial ribosomal protein bL9 family.

Its function is as follows. Binds to the 23S rRNA. In Parabacteroides distasonis (strain ATCC 8503 / DSM 20701 / CIP 104284 / JCM 5825 / NCTC 11152), this protein is Large ribosomal subunit protein bL9.